The sequence spans 407 residues: 1-deoxy-D-xylulose 5-phosphate reductoisomerase (407 aa).

NADPH contacts are provided by Thr25, Gly26, Ser27, Ile28, Asn53, and Asn136. Lys137 is a binding site for 1-deoxy-D-xylulose 5-phosphate. Glu138 contributes to the NADPH binding site. Residue Asp162 participates in Mn(2+) binding. Ser163, Glu164, Ser188, and His211 together coordinate 1-deoxy-D-xylulose 5-phosphate. Position 164 (Glu164) interacts with Mn(2+). NADPH is bound at residue Gly217. Residues Ser224, Asn229, Lys230, and Glu233 each coordinate 1-deoxy-D-xylulose 5-phosphate. Mn(2+) is bound at residue Glu233.

This sequence belongs to the DXR family. It depends on Mg(2+) as a cofactor. The cofactor is Mn(2+).

It carries out the reaction 2-C-methyl-D-erythritol 4-phosphate + NADP(+) = 1-deoxy-D-xylulose 5-phosphate + NADPH + H(+). Its pathway is isoprenoid biosynthesis; isopentenyl diphosphate biosynthesis via DXP pathway; isopentenyl diphosphate from 1-deoxy-D-xylulose 5-phosphate: step 1/6. In terms of biological role, catalyzes the NADPH-dependent rearrangement and reduction of 1-deoxy-D-xylulose-5-phosphate (DXP) to 2-C-methyl-D-erythritol 4-phosphate (MEP). The sequence is that of 1-deoxy-D-xylulose 5-phosphate reductoisomerase from Rhodopseudomonas palustris (strain BisA53).